A 357-amino-acid chain; its full sequence is UPF0744 protein C106.03 (357 aa).

At serine 282 the chain carries Phosphoserine.

The protein belongs to the UPF0744 family.

It localises to the cytoplasm. The protein is UPF0744 protein C106.03 of Schizosaccharomyces pombe (strain 972 / ATCC 24843) (Fission yeast).